We begin with the raw amino-acid sequence, 227 residues long: Cytochrome c oxidase subunit 2 (227 aa).

Residues 1–14 lie on the Mitochondrial intermembrane side of the membrane; the sequence is MAYPVQLGFQDAAS. The chain crosses the membrane as a helical span at residues 15–45; it reads PIMEELLYFHDHTLMIVFLISSLVLYIISLM. The Mitochondrial matrix portion of the chain corresponds to 46-59; sequence LTTKLMHTSTMDAQ. The chain crosses the membrane as a helical span at residues 60 to 87; it reads EVETVWTILPAIILILIALPSLRILYMM. Topologically, residues 88 to 227 are mitochondrial intermembrane; sequence DEITTPSLTL…HFEEWLLSMF (140 aa). Cu cation is bound by residues histidine 161, cysteine 196, glutamate 198, cysteine 200, histidine 204, and methionine 207. Residue glutamate 198 participates in Mg(2+) binding.

This sequence belongs to the cytochrome c oxidase subunit 2 family. In terms of assembly, component of the cytochrome c oxidase (complex IV, CIV), a multisubunit enzyme composed of 14 subunits. The complex is composed of a catalytic core of 3 subunits MT-CO1, MT-CO2 and MT-CO3, encoded in the mitochondrial DNA, and 11 supernumerary subunits COX4I, COX5A, COX5B, COX6A, COX6B, COX6C, COX7A, COX7B, COX7C, COX8 and NDUFA4, which are encoded in the nuclear genome. The complex exists as a monomer or a dimer and forms supercomplexes (SCs) in the inner mitochondrial membrane with NADH-ubiquinone oxidoreductase (complex I, CI) and ubiquinol-cytochrome c oxidoreductase (cytochrome b-c1 complex, complex III, CIII), resulting in different assemblies (supercomplex SCI(1)III(2)IV(1) and megacomplex MCI(2)III(2)IV(2)). Found in a complex with TMEM177, COA6, COX18, COX20, SCO1 and SCO2. Interacts with TMEM177 in a COX20-dependent manner. Interacts with COX20. Interacts with COX16. It depends on Cu cation as a cofactor.

It localises to the mitochondrion inner membrane. The enzyme catalyses 4 Fe(II)-[cytochrome c] + O2 + 8 H(+)(in) = 4 Fe(III)-[cytochrome c] + 2 H2O + 4 H(+)(out). Its function is as follows. Component of the cytochrome c oxidase, the last enzyme in the mitochondrial electron transport chain which drives oxidative phosphorylation. The respiratory chain contains 3 multisubunit complexes succinate dehydrogenase (complex II, CII), ubiquinol-cytochrome c oxidoreductase (cytochrome b-c1 complex, complex III, CIII) and cytochrome c oxidase (complex IV, CIV), that cooperate to transfer electrons derived from NADH and succinate to molecular oxygen, creating an electrochemical gradient over the inner membrane that drives transmembrane transport and the ATP synthase. Cytochrome c oxidase is the component of the respiratory chain that catalyzes the reduction of oxygen to water. Electrons originating from reduced cytochrome c in the intermembrane space (IMS) are transferred via the dinuclear copper A center (CU(A)) of subunit 2 and heme A of subunit 1 to the active site in subunit 1, a binuclear center (BNC) formed by heme A3 and copper B (CU(B)). The BNC reduces molecular oxygen to 2 water molecules using 4 electrons from cytochrome c in the IMS and 4 protons from the mitochondrial matrix. The polypeptide is Cytochrome c oxidase subunit 2 (MT-CO2) (Propithecus tattersalli (Golden-crowned Sifaka)).